The primary structure comprises 148 residues: Ribonuclease 4 (148 aa).

An N-terminal signal peptide occupies residues 1-29; that stretch reads MMDLQRTQSLLLLLVLTLLGLGLVQPSYG. Glutamine 30 bears the Pyrrolidone carboxylic acid mark. Positions 36, 41, 69, 72, and 73 each coordinate dUMP. Catalysis depends on histidine 41, which acts as the Proton acceptor. 4 disulfide bridges follow: cysteine 54-cysteine 110, cysteine 68-cysteine 121, cysteine 86-cysteine 136, and cysteine 93-cysteine 100. Catalysis depends on histidine 145, which acts as the Proton donor. Phenylalanine 146 lines the dUMP pocket.

The protein belongs to the pancreatic ribonuclease family. In terms of tissue distribution, expressed in the cortical tubules of the kidney (at protein level). Also expressed in the medullary tubules of the kidney.

Its subcellular location is the secreted. Cleaves preferentially after uridine bases. Has antimicrobial activity against uropathogenic E.coli (UPEC). Probably contributes to urinary tract sterility. The protein is Ribonuclease 4 (Rnase4) of Mus musculus (Mouse).